The chain runs to 116 residues: Cystatin (116 aa).

The short motif at 53-57 (QLVSG) is the Secondary area of contact element. 2 cysteine pairs are disulfide-bonded: C71-C81 and C95-C115. S80 carries the post-translational modification Phosphoserine.

Belongs to the cystatin family.

Its subcellular location is the secreted. In terms of biological role, this protein binds tightly to and inhibits papain and cathepsin B. This is Cystatin from Coturnix japonica (Japanese quail).